A 189-amino-acid polypeptide reads, in one-letter code: Ion-translocating oxidoreductase complex subunit B (189 aa).

Residues 1–26 (MSAIVIAIVVLTILALVFGVLLGFAA) form a hydrophobic region. The 4Fe-4S domain occupies 32–90 (EGNPLTDQIEALLPQTQCGQCGYPGCRPYAEAIANGDKVNKCPPGGAATMEKLADLMGV). [4Fe-4S] cluster-binding residues include cysteine 49, cysteine 52, cysteine 57, cysteine 73, cysteine 114, cysteine 117, cysteine 120, cysteine 124, cysteine 144, cysteine 147, cysteine 150, and cysteine 154. 2 consecutive 4Fe-4S ferredoxin-type domains span residues 105–134 (KVAY…GSGK) and 135–164 (LMHT…MLPV).

It belongs to the 4Fe4S bacterial-type ferredoxin family. RnfB subfamily. As to quaternary structure, the complex is composed of six subunits: RnfA, RnfB, RnfC, RnfD, RnfE and RnfG. [4Fe-4S] cluster is required as a cofactor.

It is found in the cell inner membrane. In terms of biological role, part of a membrane-bound complex that couples electron transfer with translocation of ions across the membrane. This chain is Ion-translocating oxidoreductase complex subunit B, found in Shewanella pealeana (strain ATCC 700345 / ANG-SQ1).